We begin with the raw amino-acid sequence, 267 residues long: MEMO1 family protein MM_1761 (267 aa).

Belongs to the MEMO1 family.

This chain is MEMO1 family protein MM_1761, found in Methanosarcina mazei (strain ATCC BAA-159 / DSM 3647 / Goe1 / Go1 / JCM 11833 / OCM 88) (Methanosarcina frisia).